Reading from the N-terminus, the 320-residue chain is ASGKGCLLGHDNSGYYQAKKLQGEDNTECDLEPHELKLSPLEIEVTDADGFTNGLAPGVADSHQTQGTKECGLLTAHGNNGLAKSGALDQNPKLLMGVFTVASSNSALTVADLTKAATSAIANTGLGQAHAAVKAIQDANPAANDNTSTSEDTAELQTAIMHLELQAATAGSRNMKEETKKIFTNKVQDTITKVLHNVYSHQITVPFVNNGKDTPLRSIPNTGELMEILAFYEQKVADNTAKTQKELTEAQQAMKTDRSGDGGCTQITEPTACNSKPFCSYNESTTDDDKKCKYNATKATENGVPVAQTQTGGSETTTEK.

N-linked (GlcNAc...) asparagine glycans are attached at residues N146, N282, and N295. The interval 297 to 320 is disordered; it reads TKATENGVPVAQTQTGGSETTTEK. Over residues 308 to 320 the composition is skewed to low complexity; it reads QTQTGGSETTTEK.

Its subcellular location is the cell membrane. In terms of biological role, VSG forms a coat on the surface of the parasite. The trypanosome evades the immune response of the host by expressing a series of antigenically distinct VSGs from an estimated 1000 VSG genes. The polypeptide is Variant surface glycoprotein ILTAT 1.2 (Trypanosoma brucei brucei).